We begin with the raw amino-acid sequence, 364 residues long: Phosphoserine aminotransferase (364 aa).

An L-glutamate-binding site is contributed by R42. Pyridoxal 5'-phosphate-binding positions include 76–77, W102, T156, D175, and Q198; that span reads GR. K199 carries the N6-(pyridoxal phosphate)lysine modification. 240-241 is a pyridoxal 5'-phosphate binding site; the sequence is NT.

Belongs to the class-V pyridoxal-phosphate-dependent aminotransferase family. SerC subfamily. In terms of assembly, homodimer. It depends on pyridoxal 5'-phosphate as a cofactor.

It is found in the cytoplasm. It catalyses the reaction O-phospho-L-serine + 2-oxoglutarate = 3-phosphooxypyruvate + L-glutamate. The enzyme catalyses 4-(phosphooxy)-L-threonine + 2-oxoglutarate = (R)-3-hydroxy-2-oxo-4-phosphooxybutanoate + L-glutamate. It participates in amino-acid biosynthesis; L-serine biosynthesis; L-serine from 3-phospho-D-glycerate: step 2/3. It functions in the pathway cofactor biosynthesis; pyridoxine 5'-phosphate biosynthesis; pyridoxine 5'-phosphate from D-erythrose 4-phosphate: step 3/5. Its function is as follows. Catalyzes the reversible conversion of 3-phosphohydroxypyruvate to phosphoserine and of 3-hydroxy-2-oxo-4-phosphonooxybutanoate to phosphohydroxythreonine. This is Phosphoserine aminotransferase from Shewanella woodyi (strain ATCC 51908 / MS32).